The chain runs to 382 residues: Mannitol-1-phosphate 5-dehydrogenase (382 aa).

3–14 provides a ligand contact to NAD(+); that stretch reads VLHFGAGNIGRG.

It belongs to the mannitol dehydrogenase family.

It carries out the reaction D-mannitol 1-phosphate + NAD(+) = beta-D-fructose 6-phosphate + NADH + H(+). The protein is Mannitol-1-phosphate 5-dehydrogenase of Sodalis glossinidius (strain morsitans).